The sequence spans 619 residues: Dihydroxy-acid dehydratase (619 aa).

Mg(2+) is bound at residue D81. Position 122 (C122) interacts with [2Fe-2S] cluster. The Mg(2+) site is built by D123 and K124. At K124 the chain carries N6-carboxylysine. Position 195 (C195) interacts with [2Fe-2S] cluster. E494 contributes to the Mg(2+) binding site. S520 (proton acceptor) is an active-site residue.

The protein belongs to the IlvD/Edd family. As to quaternary structure, homodimer. It depends on [2Fe-2S] cluster as a cofactor. Mg(2+) is required as a cofactor.

It carries out the reaction (2R)-2,3-dihydroxy-3-methylbutanoate = 3-methyl-2-oxobutanoate + H2O. The catalysed reaction is (2R,3R)-2,3-dihydroxy-3-methylpentanoate = (S)-3-methyl-2-oxopentanoate + H2O. It functions in the pathway amino-acid biosynthesis; L-isoleucine biosynthesis; L-isoleucine from 2-oxobutanoate: step 3/4. It participates in amino-acid biosynthesis; L-valine biosynthesis; L-valine from pyruvate: step 3/4. Functions in the biosynthesis of branched-chain amino acids. Catalyzes the dehydration of (2R,3R)-2,3-dihydroxy-3-methylpentanoate (2,3-dihydroxy-3-methylvalerate) into 2-oxo-3-methylpentanoate (2-oxo-3-methylvalerate) and of (2R)-2,3-dihydroxy-3-methylbutanoate (2,3-dihydroxyisovalerate) into 2-oxo-3-methylbutanoate (2-oxoisovalerate), the penultimate precursor to L-isoleucine and L-valine, respectively. This Shewanella frigidimarina (strain NCIMB 400) protein is Dihydroxy-acid dehydratase.